Reading from the N-terminus, the 243-residue chain is Type III pantothenate kinase (243 aa).

6-13 is an ATP binding site; it reads DIGNTNLK. A substrate-binding site is contributed by 101 to 104; it reads GSDI. Residue D103 is the Proton acceptor of the active site. An ATP-binding site is contributed by T125. T176 provides a ligand contact to substrate.

This sequence belongs to the type III pantothenate kinase family. As to quaternary structure, homodimer. It depends on NH4(+) as a cofactor. K(+) is required as a cofactor.

The protein localises to the cytoplasm. It carries out the reaction (R)-pantothenate + ATP = (R)-4'-phosphopantothenate + ADP + H(+). The protein operates within cofactor biosynthesis; coenzyme A biosynthesis; CoA from (R)-pantothenate: step 1/5. Its function is as follows. Catalyzes the phosphorylation of pantothenate (Pan), the first step in CoA biosynthesis. The protein is Type III pantothenate kinase of Mycoplasma mobile (strain ATCC 43663 / 163K / NCTC 11711) (Mesomycoplasma mobile).